A 458-amino-acid chain; its full sequence is MLPSQSPAIFTVSRLNQTVRLLLEHEMGQVWISGEISNFTQPASGHWYFTLKDDTAQVRCAMFRNSNRRVTFRPQHGQQVLVRANITLYEPRGDYQIIVESMQPAGEGLLQQKYEQLKAKLQAEGLFDQQYKKPLPSPAHCVGVITSKTGAALHDILHVLKRRDPSLPVIIYPTAVQGDDAPGQIVRAIELANQRNECDVLIVGRGGGSLEDLWSFNDERVARAIFASRIPVVSAVGHETDVTIADFVADLRAPTPSAAAEVVSRNQQELLRQVQSAQQRLEMAMDYYLANRTRRFTQIHHRLQQQHPQLWLARQQTMLERLQKRMSFALENQLKRAGQQQQRLTQRLNQQNPQPRIHRAQTRIQQLEYRLAETLRAQLSATRERFGNAVTHLEAVSPLSTLARGYSVTSAADGAVLKQVKQVKAGDTLTTRLGDGVVISEVSAVTKTRKPRKKAANP.

This sequence belongs to the XseA family. In terms of assembly, heterooligomer composed of large and small subunits.

The protein resides in the cytoplasm. It carries out the reaction Exonucleolytic cleavage in either 5'- to 3'- or 3'- to 5'-direction to yield nucleoside 5'-phosphates.. In terms of biological role, bidirectionally degrades single-stranded DNA into large acid-insoluble oligonucleotides, which are then degraded further into small acid-soluble oligonucleotides. In Escherichia coli O17:K52:H18 (strain UMN026 / ExPEC), this protein is Exodeoxyribonuclease 7 large subunit.